A 388-amino-acid polypeptide reads, in one-letter code: Protein RecA (388 aa).

ATP is bound at residue 79–86 (GPESSGKT). The interval 347–388 (IDGEEVSEQDTENKKDEPKKEEAVNEEVPLDLGDELEIEIEE) is disordered. Basic and acidic residues predominate over residues 357 to 369 (TENKKDEPKKEEA). Acidic residues predominate over residues 370–388 (VNEEVPLDLGDELEIEIEE).

It belongs to the RecA family.

It localises to the cytoplasm. In terms of biological role, can catalyze the hydrolysis of ATP in the presence of single-stranded DNA, the ATP-dependent uptake of single-stranded DNA by duplex DNA, and the ATP-dependent hybridization of homologous single-stranded DNAs. It interacts with LexA causing its activation and leading to its autocatalytic cleavage. The polypeptide is Protein RecA (Streptococcus pneumoniae (strain Hungary19A-6)).